The chain runs to 100 residues: Mitochondrial zinc maintenance protein 1, mitochondrial (100 aa).

It belongs to the complex I LYR family. MZM1 subfamily. As to quaternary structure, interacts with RIP1.

The protein localises to the mitochondrion matrix. In terms of biological role, assembly factor required for Rieske Fe-S protein RIP1 incorporation into the cytochrome b-c1 (CIII) complex. Functions as a chaperone, binding to this subunit within the mitochondrial matrix and stabilizing it prior to its translocation and insertion into the late CIII dimeric intermediate within the mitochondrial inner membrane. Modulates the mitochondrial matrix zinc pool. The chain is Mitochondrial zinc maintenance protein 1, mitochondrial (new18) from Schizosaccharomyces pombe (strain 972 / ATCC 24843) (Fission yeast).